An 88-amino-acid chain; its full sequence is Small ribosomal subunit protein uS15 (88 aa).

It belongs to the universal ribosomal protein uS15 family. In terms of assembly, part of the 30S ribosomal subunit. Forms a bridge to the 50S subunit in the 70S ribosome, contacting the 23S rRNA.

One of the primary rRNA binding proteins, it binds directly to 16S rRNA where it helps nucleate assembly of the platform of the 30S subunit by binding and bridging several RNA helices of the 16S rRNA. Functionally, forms an intersubunit bridge (bridge B4) with the 23S rRNA of the 50S subunit in the ribosome. In Acidovorax sp. (strain JS42), this protein is Small ribosomal subunit protein uS15.